The chain runs to 206 residues: Large ribosomal subunit protein uL3 (206 aa).

Residues 127–151 (SGGPSSHGSKFHRHLGGTGQATTPA) form a disordered region.

This sequence belongs to the universal ribosomal protein uL3 family. Part of the 50S ribosomal subunit. Forms a cluster with proteins L14 and L19.

In terms of biological role, one of the primary rRNA binding proteins, it binds directly near the 3'-end of the 23S rRNA, where it nucleates assembly of the 50S subunit. The sequence is that of Large ribosomal subunit protein uL3 from Borreliella burgdorferi (strain ZS7) (Borrelia burgdorferi).